The primary structure comprises 262 residues: Phosphatidylserine decarboxylase proenzyme (262 aa).

Catalysis depends on charge relay system; for autoendoproteolytic cleavage activity residues aspartate 86, histidine 142, and serine 226. Residue serine 226 is the Schiff-base intermediate with substrate; via pyruvic acid; for decarboxylase activity of the active site. Serine 226 bears the Pyruvic acid (Ser); by autocatalysis mark.

Belongs to the phosphatidylserine decarboxylase family. PSD-B subfamily. Prokaryotic type I sub-subfamily. Heterodimer of a large membrane-associated beta subunit and a small pyruvoyl-containing alpha subunit. Pyruvate serves as cofactor. Post-translationally, is synthesized initially as an inactive proenzyme. Formation of the active enzyme involves a self-maturation process in which the active site pyruvoyl group is generated from an internal serine residue via an autocatalytic post-translational modification. Two non-identical subunits are generated from the proenzyme in this reaction, and the pyruvate is formed at the N-terminus of the alpha chain, which is derived from the carboxyl end of the proenzyme. The autoendoproteolytic cleavage occurs by a canonical serine protease mechanism, in which the side chain hydroxyl group of the serine supplies its oxygen atom to form the C-terminus of the beta chain, while the remainder of the serine residue undergoes an oxidative deamination to produce ammonia and the pyruvoyl prosthetic group on the alpha chain. During this reaction, the Ser that is part of the protease active site of the proenzyme becomes the pyruvoyl prosthetic group, which constitutes an essential element of the active site of the mature decarboxylase.

The protein resides in the cell membrane. It catalyses the reaction a 1,2-diacyl-sn-glycero-3-phospho-L-serine + H(+) = a 1,2-diacyl-sn-glycero-3-phosphoethanolamine + CO2. It participates in phospholipid metabolism; phosphatidylethanolamine biosynthesis; phosphatidylethanolamine from CDP-diacylglycerol: step 2/2. Catalyzes the formation of phosphatidylethanolamine (PtdEtn) from phosphatidylserine (PtdSer). This is Phosphatidylserine decarboxylase proenzyme from Bacillus cereus (strain ATCC 10987 / NRS 248).